Here is a 325-residue protein sequence, read N- to C-terminus: Zinc finger C2HC domain-containing protein 1A (325 aa).

Residues 15–44 form a C2HC/C3H-type 1 zinc finger; it reads ELLPCKICGRTFFPVALKKHGPICQKTATK. Residues C19, C22, H34, and C38 each coordinate Zn(2+). A disordered region spans residues 43–83; sequence TKKRKTFDSSRQRAEGTDIPTVKPLKPRPEPPKKPSNWRRK. Basic and acidic residues predominate over residues 48–58; sequence TFDSSRQRAEG. The C2HC/C3H-type 2 zinc finger occupies 118–147; it reads DYIQCPYCQRRFNENAADRHINFCKEQAAR. 4 residues coordinate Zn(2+): C122, C125, H137, and C141. The interval 150–260 is disordered; sequence NKGKFSTDTK…NPAPGVLTNK (111 aa). Low complexity-rich tracts occupy residues 177–188 and 197–216; these read SNSPGTASSGSS and GKTV…SSLG. S223 is subject to Phosphoserine. At T244 the chain carries Phosphothreonine. S292 is modified (phosphoserine).

The protein belongs to the ZC2HC1 family. The cofactor is Zn(2+).

The protein is Zinc finger C2HC domain-containing protein 1A (ZC2HC1A) of Homo sapiens (Human).